The following is a 343-amino-acid chain: Heat-inducible transcription repressor HrcA (343 aa).

It belongs to the HrcA family.

In terms of biological role, negative regulator of class I heat shock genes (grpE-dnaK-dnaJ and groELS operons). Prevents heat-shock induction of these operons. The protein is Heat-inducible transcription repressor HrcA of Phytoplasma mali (strain AT).